We begin with the raw amino-acid sequence, 531 residues long: Fatty acid--[acyl-carrier-protein] ligase MmaC (531 aa).

Threonine 169 is a binding site for Mg(2+). Residues isoleucine 218, valine 308, and serine 312 each coordinate ATP. Residue glutamate 313 coordinates Mg(2+). Aspartate 403 provides a ligand contact to ATP.

Belongs to the ATP-dependent AMP-binding enzyme family. It depends on Mg(2+) as a cofactor.

The enzyme catalyses a (2E)-enoyl fatty acid + holo-[ACP] + ATP = a (2E)-enoyl-[ACP] + AMP + diphosphate. It carries out the reaction a (2E)-enoyl fatty acid + ATP + H(+) = a (2E)-2-fatty-enoyl-AMP + diphosphate. The catalysed reaction is a (2E)-2-fatty-enoyl-AMP + holo-[ACP] = a (2E)-enoyl-[ACP] + AMP + H(+). It catalyses the reaction (2E)-decenoate + holo-[ACP] + ATP = (2E)-decenoyl-[ACP] + AMP + diphosphate. The enzyme catalyses a (3R)-3-isocyanyl-fatty acid + holo-[ACP] + ATP = a (3R)-3-isocyanyl-fatty acyl-[ACP] + AMP + diphosphate. It carries out the reaction a (3R)-3-isocyanyl-fatty acid + ATP + H(+) = a (3R)-3-isocyanyl-fatty acyl-AMP + diphosphate. The catalysed reaction is a (3R)-3-isocyanyl-fatty acyl-AMP + holo-[ACP] = a (3R)-3-isocyanyl-fatty acyl-[ACP] + AMP + H(+). Acyl:acyl-carrier protein ligase involved in the biosynthesis of a unique class of isonitrile lipopeptides (INLPs) that seem to play a role in metal acquisition in M.marinum. Acts twice during the INLP pathway, catalyzing the activation of (2E)-2-decenoate as well as probably the corresponding (3R)-3-isocyanyl-fatty acid as acyl-adenylates (acyl-AMP), and then the acyl transfer to the dedicated acyl-carrier protein MmaB. This Mycobacterium marinum (strain ATCC BAA-535 / M) protein is Fatty acid--[acyl-carrier-protein] ligase MmaC.